Here is a 465-residue protein sequence, read N- to C-terminus: Asparagine--tRNA ligase (465 aa).

The protein belongs to the class-II aminoacyl-tRNA synthetase family. Homodimer.

Its subcellular location is the cytoplasm. It catalyses the reaction tRNA(Asn) + L-asparagine + ATP = L-asparaginyl-tRNA(Asn) + AMP + diphosphate + H(+). In Pseudoalteromonas atlantica (strain T6c / ATCC BAA-1087), this protein is Asparagine--tRNA ligase.